A 37-amino-acid chain; its full sequence is GKLSGISKVLRAIAKFFKGVGKARKQFKEASDLDKNQ.

As to expression, expressed by the venom gland.

The protein localises to the secreted. Disrupts biological membranes, particularly those rich in phosphocholine. Has antimicrobial activity against Gram-negative bacterium E.coli, Gram-positive bacteria B.subtilis and S.aureus, and hemolytic activity against sheep, pig and guinea pig red blood cells. Has insecticidal activity against S.frugiperda ovarian cells by opening non-selective ion channels. Enhances the insecticidal activity of spider venom neurotoxic peptides. The chain is M-oxotoxin-Ot2c from Oxyopes takobius (Lynx spider).